The sequence spans 175 residues: Polyadenylate-binding protein-interacting protein 6 (175 aa).

The short motif at 7–17 is the PAM2-like element; the sequence is TLNPYAAAYVP. The CUE domain occupies 83 to 126; that stretch reads EMDMDIEYLLATYPGLSQESINDVYLANTCDLDATIEMLNQLEI. Positions 145–175 are disordered; that stretch reads PEIITESSKQKNDGSSASSSSGIRNANVSSS. A compositionally biased stretch (polar residues) spans 166–175; that stretch reads GIRNANVSSS.

The protein is Polyadenylate-binding protein-interacting protein 6 (CID6) of Arabidopsis thaliana (Mouse-ear cress).